We begin with the raw amino-acid sequence, 179 residues long: Large ribosomal subunit protein uL6 (179 aa).

This sequence belongs to the universal ribosomal protein uL6 family. In terms of assembly, part of the 50S ribosomal subunit.

Functionally, this protein binds to the 23S rRNA, and is important in its secondary structure. It is located near the subunit interface in the base of the L7/L12 stalk, and near the tRNA binding site of the peptidyltransferase center. The sequence is that of Large ribosomal subunit protein uL6 from Chloroherpeton thalassium (strain ATCC 35110 / GB-78).